The sequence spans 166 residues: Small heat shock protein OV25-2 (166 aa).

Residues 38–149 (LNECNIGNSL…ASRNIPIRAS (112 aa)) enclose the sHSP domain. Residues 140–166 (ASRNIPIRASPKEPEANQKSAINDAKQ) form a disordered region.

This sequence belongs to the small heat shock protein (HSP20) family.

This is Small heat shock protein OV25-2 (OV25-2) from Onchocerca volvulus.